The following is an 819-amino-acid chain: Lon protease (819 aa).

The segment covering 1-14 (MNSTNNTDSQNLDP) has biased composition (polar residues). Positions 1–40 (MNSTNNTDSQNLDPNASEVEKLLDESAEAEEKVDDHTPPS) are disordered. Basic and acidic residues predominate over residues 18–38 (EVEKLLDESAEAEEKVDDHTP). The Lon N-terminal domain maps to 42–239 (LFILPLNKRP…KALVLLKKEL (198 aa)). Residue 392 to 399 (GPPGVGKT) coordinates ATP. A Lon proteolytic domain is found at 634-818 (KTPVGVATGL…DDVFKIAFPG (185 aa)). Active-site residues include S724 and K767.

This sequence belongs to the peptidase S16 family. As to quaternary structure, homohexamer. Organized in a ring with a central cavity.

The protein localises to the cytoplasm. It carries out the reaction Hydrolysis of proteins in presence of ATP.. Functionally, ATP-dependent serine protease that mediates the selective degradation of mutant and abnormal proteins as well as certain short-lived regulatory proteins. Required for cellular homeostasis and for survival from DNA damage and developmental changes induced by stress. Degrades polypeptides processively to yield small peptide fragments that are 5 to 10 amino acids long. Binds to DNA in a double-stranded, site-specific manner. The sequence is that of Lon protease from Chlamydia trachomatis serovar D (strain ATCC VR-885 / DSM 19411 / UW-3/Cx).